The primary structure comprises 427 residues: Adenylosuccinate synthetase (427 aa).

GTP-binding positions include 12–18 (GDEGKGK) and 40–42 (GHT). The Proton acceptor role is filled by Asp13. Residues Asp13 and Gly40 each contribute to the Mg(2+) site. Residues 13–16 (DEGK), 38–41 (NAGH), Thr126, Arg140, Gln221, Thr236, and Arg299 each bind IMP. The active-site Proton donor is His41. Residue 295 to 301 (STTNRPR) coordinates substrate. GTP contacts are provided by residues Arg301, 327 to 329 (KLD), and 409 to 411 (SLG).

Belongs to the adenylosuccinate synthetase family. Homodimer. It depends on Mg(2+) as a cofactor.

The protein resides in the cytoplasm. It carries out the reaction IMP + L-aspartate + GTP = N(6)-(1,2-dicarboxyethyl)-AMP + GDP + phosphate + 2 H(+). Its pathway is purine metabolism; AMP biosynthesis via de novo pathway; AMP from IMP: step 1/2. Its function is as follows. Plays an important role in the de novo pathway of purine nucleotide biosynthesis. Catalyzes the first committed step in the biosynthesis of AMP from IMP. This is Adenylosuccinate synthetase from Borrelia turicatae (strain 91E135).